A 361-amino-acid polypeptide reads, in one-letter code: uncharacterized protein (361 aa).

Positions 1–17 are cleaved as a signal peptide; sequence MNLFIYVLLLSIWTSSC. Residues 18–47 are Extracellular-facing; the sequence is LDRNESNGSATAVTTHAEFKQTKLQELRRR. Asparagine 24 carries N-linked (GlcNAc...) asparagine glycosylation. A helical membrane pass occupies residues 48–68; that stretch reads LLIIVIGTLITGYMVSCTCLL. At 69-361 the chain is on the cytoplasmic side; that stretch reads HYSCDSEEAH…EDIYKNSRNN (293 aa). Residues 95-106 show a composition bias toward polar residues; that stretch reads SSKISFTDSKSP. A disordered region spans residues 95-197; that stretch reads SSKISFTDSK…SQVSPSYPEK (103 aa). The span at 144–158 shows a compositional bias: low complexity; that stretch reads PSSQKKPSKPSAPKK. Over residues 169–185 the composition is skewed to basic residues; the sequence is HRTRSPKKAHRQAHAHK.

It localises to the membrane. This is an uncharacterized protein from Bos taurus (Bovine).